The primary structure comprises 466 residues: Phosphomethylpyrimidine synthase (466 aa).

Residues Asn-80, Met-109, Tyr-139, His-175, 195 to 197 (SRG), 236 to 239 (DSLR), and Glu-275 each bind substrate. Residue His-279 participates in Zn(2+) binding. Tyr-302 provides a ligand contact to substrate. Residue His-343 participates in Zn(2+) binding. 3 residues coordinate [4Fe-4S] cluster: Cys-423, Cys-426, and Cys-431.

The protein belongs to the ThiC family. [4Fe-4S] cluster is required as a cofactor.

The enzyme catalyses 5-amino-1-(5-phospho-beta-D-ribosyl)imidazole + S-adenosyl-L-methionine = 4-amino-2-methyl-5-(phosphooxymethyl)pyrimidine + CO + 5'-deoxyadenosine + formate + L-methionine + 3 H(+). The protein operates within cofactor biosynthesis; thiamine diphosphate biosynthesis. Catalyzes the synthesis of the hydroxymethylpyrimidine phosphate (HMP-P) moiety of thiamine from aminoimidazole ribotide (AIR) in a radical S-adenosyl-L-methionine (SAM)-dependent reaction. This chain is Phosphomethylpyrimidine synthase, found in Synechococcus sp. (strain CC9902).